The chain runs to 319 residues: Probable cystathionine gamma-synthase (319 aa).

The residue at position 197 (K197) is an N6-(pyridoxal phosphate)lysine.

This sequence belongs to the trans-sulfuration enzymes family. Homotetramer. Pyridoxal 5'-phosphate is required as a cofactor.

It localises to the cytoplasm. The catalysed reaction is O-succinyl-L-homoserine + L-cysteine = L,L-cystathionine + succinate + H(+). Catalyzes the formation of L-cystathionine from O-succinyl-L-homoserine (OSHS) and L-cysteine, via a gamma-replacement reaction. In the absence of thiol, catalyzes gamma-elimination to form 2-oxobutanoate, succinate and ammonia. In Herpetosiphon aurantiacus (Herpetosiphon giganteus), this protein is Probable cystathionine gamma-synthase (metB).